The chain runs to 65 residues: Large ribosomal subunit protein bL32 (65 aa).

The span at 1–18 (MAVPKRRHSKSRTRKRRS) shows a compositional bias: basic residues. Residues 1–20 (MAVPKRRHSKSRTRKRRSTY) are disordered.

This sequence belongs to the bacterial ribosomal protein bL32 family.

The chain is Large ribosomal subunit protein bL32 from Salinibacter ruber (strain DSM 13855 / M31).